A 249-amino-acid polypeptide reads, in one-letter code: tRNA pseudouridine synthase A (249 aa).

Aspartate 53 serves as the catalytic Nucleophile. Position 111 (tyrosine 111) interacts with substrate.

Belongs to the tRNA pseudouridine synthase TruA family. In terms of assembly, homodimer.

It catalyses the reaction uridine(38/39/40) in tRNA = pseudouridine(38/39/40) in tRNA. Formation of pseudouridine at positions 38, 39 and 40 in the anticodon stem and loop of transfer RNAs. The chain is tRNA pseudouridine synthase A from Streptococcus pneumoniae serotype 2 (strain D39 / NCTC 7466).